A 268-amino-acid chain; its full sequence is Protein MGF 300-1L (268 aa).

Residues 1–175 (MVSLTTCCLK…QTFKIFYAKN (175 aa)) lie on the Cytoplasmic side of the membrane. The chain crosses the membrane as a helical span at residues 176–193 (YSLSTLYCIFLAIYYKRY). At 194–268 (TALRKMVKIY…MYAFSQNNFW (75 aa)) the chain is on the extracellular side.

This sequence belongs to the asfivirus MGF 300 family.

It is found in the host membrane. In terms of biological role, plays a role in virus cell tropism, and may be required for efficient virus replication in macrophages. This chain is Protein MGF 300-1L, found in African swine fever virus (isolate Tick/South Africa/Pretoriuskop Pr4/1996) (ASFV).